Consider the following 435-residue polypeptide: Glucoside xylosyltransferase 1 (435 aa).

Residues 1-6 are Cytoplasmic-facing; that stretch reads MRRYLR. A helical; Signal-anchor for type II membrane protein transmembrane segment spans residues 7–29; it reads VVGLCLACGFCSLLYAFSQLAVS. Residues 30 to 435 are Lumenal-facing; that stretch reads LEEGAAVGRR…NRYDTPPKER (406 aa). N-linked (GlcNAc...) asparagine glycans are attached at residues Asn168 and Asn232.

It belongs to the glycosyltransferase 8 family.

The protein localises to the membrane. The enzyme catalyses 3-O-(beta-D-glucosyl)-L-seryl-[EGF-like domain protein] + UDP-alpha-D-xylose = 3-O-[alpha-D-xylosyl-(1-&gt;3)-beta-D-glucosyl]-L-seryl-[EGF-like domain protein] + UDP + H(+). Its function is as follows. Glycosyltransferase which elongates the O-linked glucose attached to EGF-like repeats in the extracellular domain of Notch proteins by catalyzing the addition of xylose. The polypeptide is Glucoside xylosyltransferase 1 (Gxylt1) (Rattus norvegicus (Rat)).